The sequence spans 414 residues: TYYTPEYQTKDTDILAAFRMTPQPGVPAEEAGAAVAAESSTGTWTTVWTDGLTSLDRYKGRCYDIEPVAGEENQYIAYVAYPLDLFEEGSVTNMLTSIVGNVFGFKALRALRLEDLRIPPAYSKTFIGPPHGIQVERDKLNKYGRPLLGCTIKPKLGLSAKNYGRAVYECLRGGLDFTKDDENVNSQPFMRWRDRFLFVAEALFKAQAETGEIKGHYLNATAGTCEEMMKRAVFARELGAPIVMHDYLTGGFTANTSLAYYCRDNGLLLHIHRAMHAVIDRQRNHGIHFRVLAKALRMSGGDHIHAGTVVGKLEGEREVTLGFVDLLRDDYIEKDRSRGIYFTQDWVSMPGVLPVASGGIHVWHMPALTEIFGDDSVLQFGGGTLGHPWGNAPGAVANRVASEACVQALNEGLR.

2 residues coordinate substrate: asparagine 101 and threonine 151. Lysine 153 (proton acceptor) is an active-site residue. Residue lysine 155 participates in substrate binding. Residues lysine 179, aspartate 181, and glutamate 182 each contribute to the Mg(2+) site. The residue at position 179 (lysine 179) is an N6-carboxylysine. The active-site Proton acceptor is the histidine 272. The substrate site is built by arginine 273, histidine 305, and serine 357.

The protein belongs to the RuBisCO large chain family. Type I subfamily. As to quaternary structure, heterohexadecamer of 8 large chains and 8 small chains; disulfide-linked. The disulfide link is formed within the large subunit homodimers. Mg(2+) serves as cofactor. Post-translationally, the disulfide bond which can form in the large chain dimeric partners within the hexadecamer appears to be associated with oxidative stress and protein turnover.

The protein localises to the plastid. It is found in the chloroplast. It catalyses the reaction 2 (2R)-3-phosphoglycerate + 2 H(+) = D-ribulose 1,5-bisphosphate + CO2 + H2O. The enzyme catalyses D-ribulose 1,5-bisphosphate + O2 = 2-phosphoglycolate + (2R)-3-phosphoglycerate + 2 H(+). RuBisCO catalyzes two reactions: the carboxylation of D-ribulose 1,5-bisphosphate, the primary event in carbon dioxide fixation, as well as the oxidative fragmentation of the pentose substrate in the photorespiration process. Both reactions occur simultaneously and in competition at the same active site. This Onychium japonicum (Japanese claw fern) protein is Ribulose bisphosphate carboxylase large chain (rbcL).